Consider the following 637-residue polypeptide: Phosphomethylpyrimidine synthase (637 aa).

Substrate-binding positions include asparagine 242, methionine 271, tyrosine 300, histidine 336, 356 to 358 (SRG), 397 to 400 (DGLR), and glutamate 436. Histidine 440 contacts Zn(2+). Tyrosine 463 provides a ligand contact to substrate. Histidine 504 serves as a coordination point for Zn(2+). Residues cysteine 584, cysteine 587, and cysteine 592 each coordinate [4Fe-4S] cluster.

This sequence belongs to the ThiC family. As to quaternary structure, homodimer. Requires [4Fe-4S] cluster as cofactor.

The enzyme catalyses 5-amino-1-(5-phospho-beta-D-ribosyl)imidazole + S-adenosyl-L-methionine = 4-amino-2-methyl-5-(phosphooxymethyl)pyrimidine + CO + 5'-deoxyadenosine + formate + L-methionine + 3 H(+). It participates in cofactor biosynthesis; thiamine diphosphate biosynthesis. Functionally, catalyzes the synthesis of the hydroxymethylpyrimidine phosphate (HMP-P) moiety of thiamine from aminoimidazole ribotide (AIR) in a radical S-adenosyl-L-methionine (SAM)-dependent reaction. This chain is Phosphomethylpyrimidine synthase, found in Bordetella avium (strain 197N).